The following is a 296-amino-acid chain: Homoserine kinase (296 aa).

Residue 84–94 participates in ATP binding; it reads PLARGLGSSSS.

It belongs to the GHMP kinase family. Homoserine kinase subfamily.

The protein resides in the cytoplasm. It carries out the reaction L-homoserine + ATP = O-phospho-L-homoserine + ADP + H(+). It functions in the pathway amino-acid biosynthesis; L-threonine biosynthesis; L-threonine from L-aspartate: step 4/5. Functionally, catalyzes the ATP-dependent phosphorylation of L-homoserine to L-homoserine phosphate. The protein is Homoserine kinase of Lactococcus lactis subsp. cremoris (strain SK11).